A 321-amino-acid polypeptide reads, in one-letter code: Tetraacyldisaccharide 4'-kinase (321 aa).

54–61 (SVGGTGKT) lines the ATP pocket.

It belongs to the LpxK family.

It carries out the reaction a lipid A disaccharide + ATP = a lipid IVA + ADP + H(+). The protein operates within glycolipid biosynthesis; lipid IV(A) biosynthesis; lipid IV(A) from (3R)-3-hydroxytetradecanoyl-[acyl-carrier-protein] and UDP-N-acetyl-alpha-D-glucosamine: step 6/6. In terms of biological role, transfers the gamma-phosphate of ATP to the 4'-position of a tetraacyldisaccharide 1-phosphate intermediate (termed DS-1-P) to form tetraacyldisaccharide 1,4'-bis-phosphate (lipid IVA). In Rickettsia bellii (strain OSU 85-389), this protein is Tetraacyldisaccharide 4'-kinase.